The chain runs to 542 residues: Protein MGF 505-11L (542 aa).

This sequence belongs to the asfivirus MGF 505 family.

Plays a role in virus cell tropism, and may be required for efficient virus replication in macrophages. In African swine fever virus (isolate Tick/Malawi/Lil 20-1/1983) (ASFV), this protein is Protein MGF 505-11L.